The following is a 149-amino-acid chain: Oocyte-expressed protein (149 aa).

The region spanning 49–110 (PLVFYLEAWL…RVQNRVKSVL (62 aa)) is the KH; atypical domain.

It belongs to the KHDC1 family. As to quaternary structure, component of the subcortical maternal complex (SCMC), at least composed of NLRP5, KHDC3, OOEP, and TLE6. Within the complex, interacts with NLRP5, KHDC3 and TLE6. As part of the SCMC interacts with the SCMC-associated protein NLRP4F. The SCMC may facilitate translocation of its components between the nuclear and cytoplasmic compartments. Forms a scaffold complex with KHDC3/FILIA, and interacts with BLM and TRIM25 at DNA replication forks.

The protein resides in the cytoplasm. The protein localises to the nucleus. In terms of biological role, component of the subcortical maternal complex (SCMC), a multiprotein complex that plays a key role in early embryonic development. The SCMC complex is a structural constituent of cytoplasmic lattices, which consist in fibrous structures found in the cytoplasm of oocytes and preimplantation embryos. They are required to store maternal proteins critical for embryonic development, such as proteins that control epigenetic reprogramming of the preimplantation embryo, and prevent their degradation or activation. As part of the OOEP-KHDC3 scaffold, recruits BLM and TRIM25 to DNA replication forks, thereby promoting the ubiquitination of BLM by TRIM25, enhancing BLM retainment at replication forks and therefore promoting stalled replication fork restart. Positively regulates the homologous recombination-mediated DNA double-strand break (DSB) repair pathway by regulating ATM activation and RAD51 recruitment to DSBs in oocytes. Thereby contributes to oocyte survival and the resumption and completion of meiosis. The protein is Oocyte-expressed protein (OOEP) of Canis lupus familiaris (Dog).